The primary structure comprises 316 residues: Sideroflexin-4 (316 aa).

The next 5 membrane-spanning stretches (helical) occupy residues 83–103 (QVFLPISAPLVVGSLIAHKGI), 141–161 (LLILGAVSYSTVTGALPQIIL), 174–194 (ICRSFLPVPLAAGLAAFNILV), 230–250 (ISRATLFGTTAALPTFLMALL), and 263–283 (IAPIGSMCTVITFGLMIPVSF).

It belongs to the sideroflexin family.

It localises to the mitochondrion inner membrane. Mitochondrial amino-acid transporter. Does not act as a serine transporter: not able to mediate transport of serine into mitochondria. The sequence is that of Sideroflexin-4 from Danio rerio (Zebrafish).